A 424-amino-acid polypeptide reads, in one-letter code: Serine--tRNA ligase (424 aa).

229–231 (TAE) is an L-serine binding site. Residue 260-262 (RRE) coordinates ATP. Residue glutamate 283 coordinates L-serine. 347 to 350 (EVSS) provides a ligand contact to ATP. Residue serine 383 coordinates L-serine.

It belongs to the class-II aminoacyl-tRNA synthetase family. Type-1 seryl-tRNA synthetase subfamily. As to quaternary structure, homodimer. The tRNA molecule binds across the dimer.

The protein localises to the cytoplasm. It catalyses the reaction tRNA(Ser) + L-serine + ATP = L-seryl-tRNA(Ser) + AMP + diphosphate + H(+). It carries out the reaction tRNA(Sec) + L-serine + ATP = L-seryl-tRNA(Sec) + AMP + diphosphate + H(+). It participates in aminoacyl-tRNA biosynthesis; selenocysteinyl-tRNA(Sec) biosynthesis; L-seryl-tRNA(Sec) from L-serine and tRNA(Sec): step 1/1. In terms of biological role, catalyzes the attachment of serine to tRNA(Ser). Is also able to aminoacylate tRNA(Sec) with serine, to form the misacylated tRNA L-seryl-tRNA(Sec), which will be further converted into selenocysteinyl-tRNA(Sec). In Roseiflexus sp. (strain RS-1), this protein is Serine--tRNA ligase.